Here is a 203-residue protein sequence, read N- to C-terminus: ATP-dependent Clp protease proteolytic subunit (203 aa).

The Nucleophile role is filled by Ser101. His126 is a catalytic residue.

Belongs to the peptidase S14 family. In terms of assembly, component of the chloroplastic Clp protease core complex.

The protein resides in the plastid. It localises to the chloroplast stroma. The enzyme catalyses Hydrolysis of proteins to small peptides in the presence of ATP and magnesium. alpha-casein is the usual test substrate. In the absence of ATP, only oligopeptides shorter than five residues are hydrolyzed (such as succinyl-Leu-Tyr-|-NHMec, and Leu-Tyr-Leu-|-Tyr-Trp, in which cleavage of the -Tyr-|-Leu- and -Tyr-|-Trp bonds also occurs).. Cleaves peptides in various proteins in a process that requires ATP hydrolysis. Has a chymotrypsin-like activity. Plays a major role in the degradation of misfolded proteins. This Marchantia polymorpha (Common liverwort) protein is ATP-dependent Clp protease proteolytic subunit.